The sequence spans 98 residues: Putative protein adenylyltransferase MJ0126 (98 aa).

Positions 31 to 45 (GSYARNEQTETSDID) match the GSX(10)DXD motif motif. Mg(2+)-binding residues include aspartate 43, aspartate 45, and aspartate 75.

It belongs to the MntA antitoxin family. As to quaternary structure, probably forms a complex with cognate toxin MJ0125. Requires Mg(2+) as cofactor.

It catalyses the reaction L-tyrosyl-[protein] + ATP = O-(5'-adenylyl)-L-tyrosyl-[protein] + diphosphate. The enzyme catalyses O-(5'-adenylyl)-L-tyrosyl-[protein] + ATP = O-[5'-(adenylyl-(5'-&gt;3')-adenylyl)]-L-tyrosyl-[protein] + diphosphate. Probable antitoxin component of a putative type VII toxin-antitoxin (TA) system. Neutralizes cognate toxic MJ0125 by di-AMPylation. The chain is Putative protein adenylyltransferase MJ0126 from Methanocaldococcus jannaschii (strain ATCC 43067 / DSM 2661 / JAL-1 / JCM 10045 / NBRC 100440) (Methanococcus jannaschii).